A 696-amino-acid polypeptide reads, in one-letter code: DNA ligase (696 aa).

Residues 36–40 (DAEYD), 85–86 (SL), and Glu123 each bind NAD(+). The active-site N6-AMP-lysine intermediate is the Lys125. NAD(+) contacts are provided by Arg146, Glu181, Lys319, and Lys343. Cys437, Cys440, Cys455, and Cys461 together coordinate Zn(2+). The region spanning 618 to 696 (PEGTSLAGKT…EDGLKALLGL (79 aa)) is the BRCT domain.

It belongs to the NAD-dependent DNA ligase family. LigA subfamily. It depends on Mg(2+) as a cofactor. The cofactor is Mn(2+).

It catalyses the reaction NAD(+) + (deoxyribonucleotide)n-3'-hydroxyl + 5'-phospho-(deoxyribonucleotide)m = (deoxyribonucleotide)n+m + AMP + beta-nicotinamide D-nucleotide.. Functionally, DNA ligase that catalyzes the formation of phosphodiester linkages between 5'-phosphoryl and 3'-hydroxyl groups in double-stranded DNA using NAD as a coenzyme and as the energy source for the reaction. It is essential for DNA replication and repair of damaged DNA. The sequence is that of DNA ligase from Bordetella bronchiseptica (strain ATCC BAA-588 / NCTC 13252 / RB50) (Alcaligenes bronchisepticus).